We begin with the raw amino-acid sequence, 350 residues long: GDSL esterase/lipase At4g10955 (350 aa).

This sequence belongs to the 'GDSL' lipolytic enzyme family.

The sequence is that of GDSL esterase/lipase At4g10955 from Arabidopsis thaliana (Mouse-ear cress).